Reading from the N-terminus, the 748-residue chain is Cysteine--tRNA ligase, cytoplasmic (748 aa).

Residues 1 to 25 are disordered; it reads MAAAPAEQGKGKRVQPPWSPPEGTK. Cys55 is a binding site for Zn(2+). Gly56 is a binding site for L-cysteine. Residues 57–67 carry the 'HIGH' region motif; the sequence is PTVYDASHMGH. Thr96 is a binding site for L-cysteine. The 'KIIK' region signature appears at 101–104; it reads KIIK. Cys348, His373, and Glu377 together coordinate Zn(2+). Residue His373 participates in L-cysteine binding. The 'KMSKS' region motif lies at 406 to 410; that stretch reads KMSKS. Lys409 is an ATP binding site. 2 stretches are compositionally biased toward basic and acidic residues: residues 656 to 679 and 686 to 717; these read KIEEEKKRKKEEAARKKQEQEAAK and PPHEMFKSEHDKYSKFDENGFPTHDTEGKELS. Residues 656–719 are disordered; the sequence is KIEEEKKRKK…DTEGKELSKG (64 aa).

Belongs to the class-I aminoacyl-tRNA synthetase family. As to quaternary structure, homodimer. The cofactor is Zn(2+).

Its subcellular location is the cytoplasm. It carries out the reaction tRNA(Cys) + L-cysteine + ATP = L-cysteinyl-tRNA(Cys) + AMP + diphosphate. Functionally, catalyzes the ATP-dependent ligation of cysteine to tRNA(Cys). The protein is Cysteine--tRNA ligase, cytoplasmic (CARS1) of Gallus gallus (Chicken).